Here is a 207-residue protein sequence, read N- to C-terminus: Large ribosomal subunit protein bL25 (207 aa).

It belongs to the bacterial ribosomal protein bL25 family. CTC subfamily. As to quaternary structure, part of the 50S ribosomal subunit; part of the 5S rRNA/L5/L18/L25 subcomplex. Contacts the 5S rRNA. Binds to the 5S rRNA independently of L5 and L18.

This is one of the proteins that binds to the 5S RNA in the ribosome where it forms part of the central protuberance. The sequence is that of Large ribosomal subunit protein bL25 from Rhizorhabdus wittichii (strain DSM 6014 / CCUG 31198 / JCM 15750 / NBRC 105917 / EY 4224 / RW1) (Sphingomonas wittichii).